A 428-amino-acid chain; its full sequence is MRDNSAKGITAGSESQQTTYDPTRTEAALTASTTFALRRYDLAGRALYDLDFSRLNPQTPTRDQTGQITFNPFGGFGLSGAAPQQWNEVKNKVPVEVAQDPSNPYRFAVLLVPRSVVYYEQLQRGLALPNQGSSSGSGQQNTTIGAYGLKVKNAEADTAKSNEKLQGDESKSSNGSSSTSTTTQRGGSSGDTKVKALQVAVKKKSGSQGNSGEQGTEQVELESNDLANAPIKRGEESGQSVQLKAADFGTTPSSSGSGGNSNPGSPTPWRPWLATEQIHKDLPKWSASILILYDAPYARNRTAIDRVDHLDPKVMTANYPPSWRTPKWNHHGLWDWKARDVLLQTTGFFNSRRHPEWFDQGQAVADNTQTGFDTDDTDNKKTRLSKGSWLRQAGPDRPPVWSVLRQHWQPHLVRASAFGVWDLFVLIN.

3 disordered regions span residues 1 to 25 (MRDNSAKGITAGSESQQTTYDPTRT), 157 to 219 (DTAK…TEQV), and 247 to 271 (DFGTTPSSSGSGGNSNPGSPTPWRP). A compositionally biased stretch (polar residues) spans 12-22 (GSESQQTTYDP). Residues 157 to 171 (DTAKSNEKLQGDESK) are compositionally biased toward basic and acidic residues. Positions 172–186 (SSNGSSSTSTTTQRG) are enriched in low complexity. Polar residues predominate over residues 206 to 217 (GSQGNSGEQGTE).

This sequence belongs to the adhesin P1 family.

This is an uncharacterized protein from Mycoplasma pneumoniae (strain ATCC 29342 / M129 / Subtype 1) (Mycoplasmoides pneumoniae).